Reading from the N-terminus, the 828-residue chain is MDVGYVCEWDKRPRTSHCPSIPLVCAWSCRNLIAFTTDQRNEEEKDITNLIHILDTEHPWDVYSINSGHQEVITSLEWDQSGSRLLSADADGRIKCWGMTDHLANSWQSLVGSEVDGDPIVALSWLHNGVKLALHVEKSGVSSFGEKFSRVKFSPSLTLFGGKPMEGWIAVTVSGLVTVSLLKPNGQVLTATESLCRLRCRVALADIAFTGGGNIVVATCDGSSTSPVQFYKVCVSVVSEKCKIDTEILPSLFMRCTTDPARKDKFPAVTHLKFLARDMSEQVLLCASNQCSSIAECWSLRKEGLPLNNIFQQLSPAVSDKQPMILKWRILSATNELERVSAVALPKLPISLTNTDIKVASETKFYPGLGLALAFHDGNVQIVHRLSLQPMAVLYGSSLRPSEEPSLKRQRSPTPCIHFKALQMSWTSLALVGLDTQGKLSMLRVSPSMGHSLDMSTSLRHLLFLLEYCMVTGYDWWDILLHVQPGMVHNLVEKLNEEYTRQNAALQQVLSTRILAMKASLCKLSQTTVTRVCDYHAKLFLISISCTLKSLLRPHVLNTPDKSPGDRLTEICNKFTDTDIDKVMINLKTEEFVLDMPTLQSLQQLIQWLGDFVLYLLASLPNQGSSVRPGHSFLRDGASLGTLREMMVMIRIWGLLKPSCLPVYTATSDTQDSMSLLFRLLTRLWLCCRDESHPCDPDESLIDECCLLPSQLLIPNMDWLPLGNGIISRLQSKLPLRLQFGKPPVAPSYASVQYEAYTRSPTQPKIDHLRRLHLGTFPTEPCKSCTRCGCVTMLKSPNKATAVKQWEQRWIKTCLCGGLWRKMPHTYS.

WD repeat units follow at residues 68 to 107 (GHQEVITSLEWDQSGSRLLSADADGRIKCWGMTDHLANSW), 199 to 241 (RCRV…VSEK), 264 to 308 (DKFP…LPLN), 622 to 663 (NQGS…CLPV), and 777 to 816 (FPTEPCKSCTRCGCVTMLKSPNKATAVKQWEQRWIKTCLC).

The protein belongs to the Mediator complex subunit 16 family. In terms of assembly, component of the Mediator complex.

The protein localises to the nucleus. Functionally, component of the Mediator complex, a coactivator involved in the regulated transcription of nearly all RNA polymerase II-dependent genes. Mediator functions as a bridge to convey information from gene-specific regulatory proteins to the basal RNA polymerase II transcription machinery. Mediator is recruited to promoters by direct interactions with regulatory proteins and serves as a scaffold for the assembly of a functional preinitiation complex with RNA polymerase II and the general transcription factors. This Xenopus tropicalis (Western clawed frog) protein is Mediator of RNA polymerase II transcription subunit 16 (med16).